Here is a 280-residue protein sequence, read N- to C-terminus: UPF0494 membrane protein SPAC212.01c (280 aa).

4 helical membrane passes run 107–127 (WPLL…KFEV), 144–164 (IWVP…SLIF), 178–198 (VIIA…GMII), and 199–219 (AALG…LYFG).

This sequence belongs to the UPF0494 family.

It localises to the membrane. This is UPF0494 membrane protein SPAC212.01c from Schizosaccharomyces pombe (strain 972 / ATCC 24843) (Fission yeast).